The following is a 423-amino-acid chain: Histidine--tRNA ligase (423 aa).

It belongs to the class-II aminoacyl-tRNA synthetase family. Homodimer.

The protein resides in the cytoplasm. The catalysed reaction is tRNA(His) + L-histidine + ATP = L-histidyl-tRNA(His) + AMP + diphosphate + H(+). In Phytoplasma mali (strain AT), this protein is Histidine--tRNA ligase.